The following is a 140-amino-acid chain: MLSPKKTKYRKFHRGRLKGHATKGSALAFGRYGIQALTSSWITSRQIESVRRVIVRHLKRGGKLWIRIFPDKAVTAKPLETRMGSGKGSPEHWIAVVKSGHILFEIDGVSLELAKEAVKLAIYKLPIKCKFLSNDEFAKD.

Belongs to the universal ribosomal protein uL16 family. As to quaternary structure, part of the 50S ribosomal subunit.

Its subcellular location is the plastid. The protein resides in the chloroplast. The polypeptide is Large ribosomal subunit protein uL16c (Cyanidium caldarium (Red alga)).